The following is a 159-amino-acid chain: Ribosomal RNA large subunit methyltransferase H (159 aa).

Residues L76, G108, and 127–132 (FSRMTF) each bind S-adenosyl-L-methionine.

This sequence belongs to the RNA methyltransferase RlmH family. In terms of assembly, homodimer.

The protein resides in the cytoplasm. It carries out the reaction pseudouridine(1915) in 23S rRNA + S-adenosyl-L-methionine = N(3)-methylpseudouridine(1915) in 23S rRNA + S-adenosyl-L-homocysteine + H(+). Functionally, specifically methylates the pseudouridine at position 1915 (m3Psi1915) in 23S rRNA. This is Ribosomal RNA large subunit methyltransferase H from Bacillus pumilus (strain SAFR-032).